A 209-amino-acid polypeptide reads, in one-letter code: Flavin prenyltransferase UbiX (209 aa).

FMN contacts are provided by residues 13–15 (GAS), S39, 104–107 (STGT), C116, and R139. Dimethylallyl phosphate-binding residues include Y169 and R185.

Belongs to the UbiX/PAD1 family.

The catalysed reaction is dimethylallyl phosphate + FMNH2 = prenylated FMNH2 + phosphate. In terms of biological role, flavin prenyltransferase that catalyzes the synthesis of the prenylated FMN cofactor (prenyl-FMN) for 4-hydroxy-3-polyprenylbenzoic acid decarboxylase UbiD. The prenyltransferase is metal-independent and links a dimethylallyl moiety from dimethylallyl monophosphate (DMAP) to the flavin N5 and C6 atoms of FMN. In Pseudomonas aeruginosa (strain ATCC 15692 / DSM 22644 / CIP 104116 / JCM 14847 / LMG 12228 / 1C / PRS 101 / PAO1), this protein is Flavin prenyltransferase UbiX.